The sequence spans 64 residues: MNIRPGNFDEIDRSVFDRFPKRNIDEIDTAFDSFFKRNIDEIDRVGWNGFVKRLNNYLADRQRR.

2 propeptides span residues 1–6 and 23–24; these read MNIRPG and NI.

The protein belongs to the orcokinin family. In terms of tissue distribution, orcokinin-3 is expressed throughout the central nervous system (at protein level).

Its subcellular location is the secreted. Myotropic peptides. The polypeptide is Orcokinin peptides (Camponotus floridanus (Florida carpenter ant)).